The primary structure comprises 379 residues: Gap junction alpha-1 protein (379 aa).

At 2-23 (GDWSALGRLLDKVQAYSTAGGK) the chain is on the cytoplasmic side. Residues 24–44 (VWLSVLFIFRILLLGTAVESA) form a helical membrane-spanning segment. Residues 45–76 (WGDEQSAFVCNTQQPGCENVCYDKSFPISHVR) lie on the Extracellular side of the membrane. 2 cysteine pairs are disulfide-bonded: C54–C192 and C187–C198. The helical transmembrane segment at 77-97 (FWVLQIIFVSTPTLLYLAHVF) threads the bilayer. Over 98–163 (YLMRKEEKLN…TYIISILFKS (66 aa)) the chain is Cytoplasmic. The helical transmembrane segment at 164–184 (VFEVGFIIIQWYMYGFSLSAI) threads the bilayer. The Extracellular portion of the chain corresponds to 185–207 (YTCKRDPCPHQVDCFLSRPTEKT). A helical membrane pass occupies residues 208–228 (IFIWFMLIVSIVSLALNIIEL). Residues 229–379 (FYVTYKSIKD…SRPRPDDLEI (151 aa)) lie on the Cytoplasmic side of the membrane. The segment at 322 to 379 (STISNTHAQPFDFSDEHQNTKKMAPGHEMQPLTILDQRPSSRASSHASSRPRPDDLEI) is disordered. Residues 359 to 371 (RPSSRASSHASSR) show a composition bias toward low complexity.

Belongs to the connexin family. Alpha-type (group II) subfamily. A connexon is composed of a hexamer of connexins. Interacts with TMEM65. In terms of tissue distribution, expressed in most tissues. Highest levels found in eye and brain.

The protein localises to the cell membrane. Its subcellular location is the cell junction. It localises to the gap junction. Its function is as follows. One gap junction consists of a cluster of closely packed pairs of transmembrane channels, the connexons, through which materials of low MW diffuse from one cell to a neighboring cell. Plays an essential role in gap junction communication in the ventricles. This is Gap junction alpha-1 protein (gja1) from Xenopus laevis (African clawed frog).